The sequence spans 267 residues: Eukaryotic translation initiation factor 3 subunit K (267 aa).

The 188-residue stretch at 46–233 folds into the PCI domain; sequence FDCYANLALL…EARSEVKSER (188 aa).

Belongs to the eIF-3 subunit K family. As to quaternary structure, component of the eukaryotic translation initiation factor 3 (eIF-3) complex.

It localises to the cytoplasm. Its function is as follows. Component of the eukaryotic translation initiation factor 3 (eIF-3) complex, which is involved in protein synthesis of a specialized repertoire of mRNAs and, together with other initiation factors, stimulates binding of mRNA and methionyl-tRNAi to the 40S ribosome. The eIF-3 complex specifically targets and initiates translation of a subset of mRNAs involved in cell proliferation. This is Eukaryotic translation initiation factor 3 subunit K from Aspergillus niger (strain ATCC MYA-4892 / CBS 513.88 / FGSC A1513).